A 370-amino-acid chain; its full sequence is Glutamate 5-kinase (370 aa).

Residue Lys13 participates in ATP binding. Substrate is bound by residues Ser52, Asp139, and Asn151. ATP contacts are provided by residues 171–172 (SD) and 211–217 (SGGMKSK). The 79-residue stretch at 275-353 (KGELVLDRGA…AEIEAVLGYR (79 aa)) folds into the PUA domain.

It belongs to the glutamate 5-kinase family.

It is found in the cytoplasm. The catalysed reaction is L-glutamate + ATP = L-glutamyl 5-phosphate + ADP. Its pathway is amino-acid biosynthesis; L-proline biosynthesis; L-glutamate 5-semialdehyde from L-glutamate: step 1/2. Its function is as follows. Catalyzes the transfer of a phosphate group to glutamate to form L-glutamate 5-phosphate. This Thermus thermophilus (strain ATCC BAA-163 / DSM 7039 / HB27) protein is Glutamate 5-kinase.